The primary structure comprises 307 residues: Cyclin-dependent kinase 5 activator 1 (307 aa).

Gly2 carries N-myristoyl glycine lipidation. Ser8 is subject to Phosphoserine; by CDK5. Residues 97–133 form a disordered region; sequence TFAQPPPAQPPAPPASQLSGSQTGVSSSVKKAPHPAI. Pro residues predominate over residues 100–110; the sequence is QPPPAQPPAPP. Residues 112–125 show a composition bias toward polar residues; it reads SQLSGSQTGVSSSV. Thr138 carries the phosphothreonine; by CDK5 modification.

The protein belongs to the cyclin-dependent kinase 5 activator family. In terms of assembly, heterodimer composed of a catalytic subunit CDK5 and a regulatory subunit CDK5R1 (p25) and macromolecular complex composed of at least CDK5, CDK5R1 (p35) and CDK5RAP1 or CDK5RAP2 or CDK5RAP3. Only the heterodimer shows kinase activity. Interacts with EPHA4 and NGEF; may mediate the activation of NGEF by EPHA4. Interacts with RASGRF2. The complex p35/CDK5 interacts with CLOCK. The p35 form is proteolytically cleaved by calpain, giving rise to the p25 form. P35 has a 5 to 10 fold shorter half-life compared to p25. The conversion results in deregulation of the CDK5 kinase: p25/CDK5 kinase displays an increased and altered tau phosphorylation in comparison to the p35/CDK5 kinase in vivo. Post-translationally, myristoylated. A proper myristoylation signal is essential for the proper distribution of p35. In terms of processing, phosphorylation at Ser-8 and Thr-138 by CDK5 prevents calpain-mediated proteolysis. Ubiquitinated, leading to its degradation: degradation of p35 by proteasome results in down-regulation of CDK5 activity. During this process, CDK5 phosphorylates p35 and induces its ubiquitination and subsequent degradation. Ubiquitinated by the CRL2(FEM1B) complex, which recognizes the -Gly-Leu-Asp-Arg C-degron at the C-terminus, leading to its degradation. Brain and neuron specific.

Its subcellular location is the cell membrane. The protein resides in the cell projection. It is found in the neuron projection. It localises to the nucleus. The protein localises to the cytoplasm. Its subcellular location is the perinuclear region. The protein resides in the perikaryon. Its function is as follows. p35 is a neuron specific activator of CDK5. The complex p35/CDK5 is required for neurite outgrowth and cortical lamination. Involved in dendritic spine morphogenesis by mediating the EFNA1-EPHA4 signaling. Activator of TPKII. The complex p35/CDK5 participates in the regulation of the circadian clock by modulating the function of CLOCK protein: phosphorylates CLOCK at 'Thr-451' and 'Thr-461' and regulates the transcriptional activity of the CLOCK-BMAL1 heterodimer in association with altered stability and subcellular distribution. The chain is Cyclin-dependent kinase 5 activator 1 (Cdk5r1) from Rattus norvegicus (Rat).